An 83-amino-acid polypeptide reads, in one-letter code: Mu-conotoxin-like PnMKLT1-014 (83 aa).

The signal sequence occupies residues 1–22 (MNLTCMMIVAVLFLTAWTFVMA). Positions 23–50 (DDSNNGLANLFSKSRYEMEDPEPSKLEK) are excised as a propeptide. 3 cysteine pairs are disulfide-bonded: Cys-54-Cys-72, Cys-61-Cys-77, and Cys-71-Cys-82.

Belongs to the conotoxin O1 superfamily. Expressed by the venom duct.

The protein resides in the secreted. Mu-conotoxins block voltage-gated sodium channels (Nav). This Conus pennaceus (Feathered cone) protein is Mu-conotoxin-like PnMKLT1-014.